The chain runs to 591 residues: Aspartate--tRNA(Asp/Asn) ligase (591 aa).

Glutamate 175 is a binding site for L-aspartate. Positions 199 to 202 (QQFK) are aspartate. Residues arginine 221 and histidine 453 each coordinate L-aspartate. Position 221 to 223 (221 to 223 (RDE)) interacts with ATP. Glutamate 486 lines the ATP pocket. Residue arginine 493 coordinates L-aspartate. Position 538–541 (538–541 (GIDR)) interacts with ATP.

This sequence belongs to the class-II aminoacyl-tRNA synthetase family. Type 1 subfamily. As to quaternary structure, homodimer.

It localises to the cytoplasm. It carries out the reaction tRNA(Asx) + L-aspartate + ATP = L-aspartyl-tRNA(Asx) + AMP + diphosphate. Functionally, aspartyl-tRNA synthetase with relaxed tRNA specificity since it is able to aspartylate not only its cognate tRNA(Asp) but also tRNA(Asn). Reaction proceeds in two steps: L-aspartate is first activated by ATP to form Asp-AMP and then transferred to the acceptor end of tRNA(Asp/Asn). The sequence is that of Aspartate--tRNA(Asp/Asn) ligase from Cereibacter sphaeroides (strain KD131 / KCTC 12085) (Rhodobacter sphaeroides).